A 1794-amino-acid chain; its full sequence is Non-reducing polyketide synthase nscA (1794 aa).

The tract at residues 19–256 (DLKDLFRRLH…PLPVYDGLCH (238 aa)) is N-terminal acylcarrier protein transacylase domain (SAT). Positions 389 to 822 (ASKLAIVGMA…GGNTTVLLED (434 aa)) constitute a Ketosynthase family 3 (KS3) domain. The disordered stretch occupies residues 427–448 (PDRFDLNTHYDPTGKTENATQT). Residues 428–440 (DRFDLNTHYDPTG) show a composition bias toward basic and acidic residues. Catalysis depends on for beta-ketoacyl synthase activity residues C562, H697, and H740. The malonyl-CoA:ACP transacylase (MAT) domain stretch occupies residues 928 to 1249 (FTGQGAYYSG…LVTLHLAGLT (322 aa)). The product template (PT) domain stretch occupies residues 1314–1633 (TSLVHQITAE…RLLMDRFFSP (320 aa)). The segment at 1318–1454 (HQITAETVEA…GVVRFEDPAA (137 aa)) is N-terminal hotdog fold. The 311-residue stretch at 1318 to 1628 (HQITAETVEA…FRRVPRLLMD (311 aa)) folds into the PKS/mFAS DH domain. The active-site Proton acceptor; for dehydratase activity is H1350. Residues 1482 to 1628 (ASKLSKPLAY…FRRVPRLLMD (147 aa)) form a C-terminal hotdog fold region. Residue D1539 is the Proton donor; for dehydratase activity of the active site. Disordered regions lie at residues 1637–1665 (SHAE…EAPA) and 1682–1718 (ASKS…GDPV). 2 stretches are compositionally biased toward polar residues: residues 1644–1655 (QETAPSATSVKK) and 1685–1701 (SEVS…QESP). The Carrier domain maps to 1717–1794 (PVDAGVVGQC…EMTAWLEEYC (78 aa)). An O-(pantetheine 4'-phosphoryl)serine modification is found at S1754.

Pantetheine 4'-phosphate is required as a cofactor.

The protein operates within secondary metabolite biosynthesis. In terms of biological role, non-reducing polyketide synthase; part of the gene cluster that mediates the biosynthesis of neosartoricin, a prenylated anthracenone that exhibits T-cell antiproliferative activity, suggestive of a physiological role as an immunosuppressive agent. The non-reducing polyketide synthase nscA probably synthesizes and cyclizes the decaketide backbone. The hydrolase nscB then mediates the product release through hydrolysis followed by spontaneous decarboxylation. The prenyltransferase nscD catalyzes the addition of the dimethylallyl group to the aromatic C5. The FAD-dependent monooxygenase nscC is then responsible for the stereospecific hydroxylation at C2. There is no gene encoding O-acetyltransferase in the nsc gene cluster; thus, the last step of 2-O-acetylation leading to neosartoricin may be catalyzed by an unidentified O-acetyltransferase. The polypeptide is Non-reducing polyketide synthase nscA (Neosartorya fischeri (strain ATCC 1020 / DSM 3700 / CBS 544.65 / FGSC A1164 / JCM 1740 / NRRL 181 / WB 181) (Aspergillus fischerianus)).